The sequence spans 660 residues: Methionine--tRNA ligase 1 (660 aa).

The 'HIGH' region signature appears at 15–25 (YYPSGKLHIGH). Positions 310–314 (KMSKS) match the 'KMSKS' region motif. Residue Lys-313 participates in ATP binding. The 101-residue stretch at 560–660 (DFFKVELRVA…QNLPNGTKIK (101 aa)) folds into the tRNA-binding domain.

The protein belongs to the class-I aminoacyl-tRNA synthetase family. MetG type 2B subfamily. In terms of assembly, homodimer.

It is found in the cytoplasm. The enzyme catalyses tRNA(Met) + L-methionine + ATP = L-methionyl-tRNA(Met) + AMP + diphosphate. Its function is as follows. Is required not only for elongation of protein synthesis but also for the initiation of all mRNA translation through initiator tRNA(fMet) aminoacylation. The sequence is that of Methionine--tRNA ligase 1 from Bacillus cereus (strain ATCC 14579 / DSM 31 / CCUG 7414 / JCM 2152 / NBRC 15305 / NCIMB 9373 / NCTC 2599 / NRRL B-3711).